The following is a 288-amino-acid chain: Acetyl-coenzyme A carboxylase carboxyl transferase subunit beta (288 aa).

In terms of domain architecture, CoA carboxyltransferase N-terminal spans 32–288 (LFAKCPACKH…LELHTEVENV (257 aa)). 4 residues coordinate Zn(2+): Cys36, Cys39, Cys54, and Cys57. The segment at 36–57 (CPACKHTIYQKDLGKNKVCPNC) adopts a C4-type zinc-finger fold.

The protein belongs to the AccD/PCCB family. In terms of assembly, acetyl-CoA carboxylase is a heterohexamer composed of biotin carboxyl carrier protein (AccB), biotin carboxylase (AccC) and two subunits each of ACCase subunit alpha (AccA) and ACCase subunit beta (AccD). Requires Zn(2+) as cofactor.

The protein localises to the cytoplasm. It catalyses the reaction N(6)-carboxybiotinyl-L-lysyl-[protein] + acetyl-CoA = N(6)-biotinyl-L-lysyl-[protein] + malonyl-CoA. The protein operates within lipid metabolism; malonyl-CoA biosynthesis; malonyl-CoA from acetyl-CoA: step 1/1. Its function is as follows. Component of the acetyl coenzyme A carboxylase (ACC) complex. Biotin carboxylase (BC) catalyzes the carboxylation of biotin on its carrier protein (BCCP) and then the CO(2) group is transferred by the transcarboxylase to acetyl-CoA to form malonyl-CoA. This chain is Acetyl-coenzyme A carboxylase carboxyl transferase subunit beta, found in Lactococcus lactis subsp. cremoris (strain MG1363).